A 313-amino-acid polypeptide reads, in one-letter code: tRNA(Ile)-lysidine synthase (313 aa).

37–42 (SGGPDS) provides a ligand contact to ATP.

Belongs to the tRNA(Ile)-lysidine synthase family.

The protein localises to the cytoplasm. It carries out the reaction cytidine(34) in tRNA(Ile2) + L-lysine + ATP = lysidine(34) in tRNA(Ile2) + AMP + diphosphate + H(+). Its function is as follows. Ligates lysine onto the cytidine present at position 34 of the AUA codon-specific tRNA(Ile) that contains the anticodon CAU, in an ATP-dependent manner. Cytidine is converted to lysidine, thus changing the amino acid specificity of the tRNA from methionine to isoleucine. In Corynebacterium efficiens (strain DSM 44549 / YS-314 / AJ 12310 / JCM 11189 / NBRC 100395), this protein is tRNA(Ile)-lysidine synthase.